The sequence spans 115 residues: MPKANNAVASRARRKRILKKAKGFWGSRGNILTVVKHAVDKAEQYAYRDRRAKKRTFRSLWIMRINAAARLNGTTYSRLVDAMSKKSVEIDRKVLAEIAVKDPAAFTQIVKSVID.

Belongs to the bacterial ribosomal protein bL20 family.

Functionally, binds directly to 23S ribosomal RNA and is necessary for the in vitro assembly process of the 50S ribosomal subunit. It is not involved in the protein synthesizing functions of that subunit. This Chlorobium limicola (strain DSM 245 / NBRC 103803 / 6330) protein is Large ribosomal subunit protein bL20.